The following is a 247-amino-acid chain: 14-3-3 protein gamma-B (247 aa).

The protein belongs to the 14-3-3 family. As to quaternary structure, homodimer, and heterodimer with other family members.

It localises to the cytoplasm. Adapter protein implicated in the regulation of a large spectrum of both general and specialized signaling pathways. Binds to a large number of partners, usually by recognition of a phosphoserine or phosphothreonine motif. Binding generally results in the modulation of the activity of the binding partner. The polypeptide is 14-3-3 protein gamma-B (ywhag-b) (Xenopus laevis (African clawed frog)).